Reading from the N-terminus, the 479-residue chain is Ribulose bisphosphate carboxylase large chain (479 aa).

Positions 1-2 are excised as a propeptide; it reads MS. Residues Asn-123 and Thr-173 each contribute to the substrate site. Lys-175 (proton acceptor) is an active-site residue. Lys-177 serves as a coordination point for substrate. Mg(2+) contacts are provided by Lys-201, Asp-203, and Glu-204. Lys-201 carries the N6-carboxylysine modification. Position 208 is a phosphoserine (Ser-208). His-294 functions as the Proton acceptor in the catalytic mechanism. Substrate contacts are provided by Arg-295 and His-327. Thr-330 is modified (phosphothreonine). Residue Ser-379 coordinates substrate.

It belongs to the RuBisCO large chain family. Type I subfamily. As to quaternary structure, heterohexadecamer of 8 large chains and 8 small chains; disulfide-linked. The disulfide link is formed within the large subunit homodimers. Requires Mg(2+) as cofactor. In terms of processing, the disulfide bond which can form in the large chain dimeric partners within the hexadecamer appears to be associated with oxidative stress and protein turnover.

The protein resides in the plastid. It is found in the chloroplast. The catalysed reaction is 2 (2R)-3-phosphoglycerate + 2 H(+) = D-ribulose 1,5-bisphosphate + CO2 + H2O. The enzyme catalyses D-ribulose 1,5-bisphosphate + O2 = 2-phosphoglycolate + (2R)-3-phosphoglycerate + 2 H(+). Functionally, ruBisCO catalyzes two reactions: the carboxylation of D-ribulose 1,5-bisphosphate, the primary event in carbon dioxide fixation, as well as the oxidative fragmentation of the pentose substrate in the photorespiration process. Both reactions occur simultaneously and in competition at the same active site. This is Ribulose bisphosphate carboxylase large chain from Nasturtium officinale (Watercress).